A 211-amino-acid polypeptide reads, in one-letter code: Calaxin (211 aa).

EF-hand domains are found at residues 64–99 (TDDM…FLRG), 100–135 (SLEE…SLLK), and 145–180 (GIKD…ETLL). Asp-77, Asp-79, Asp-81, Cys-83, Glu-88, Asp-113, Asn-115, Asp-117, Glu-124, Asp-158, Asp-160, Asp-162, Lys-164, and Asp-169 together coordinate Ca(2+).

In terms of assembly, component of the outer dynein arm-docking complex along with ODAD1, ODAD2, ODAD3 and ODAD4. As to expression, strong expression in the respiratory epithelium. Expressed in the sperm.

The protein localises to the cytoplasm. It is found in the cytoskeleton. It localises to the cilium axoneme. The protein resides in the cell projection. Its subcellular location is the cilium. The protein localises to the flagellum. Its function is as follows. Component of the outer dynein arm-docking complex (ODA-DC) that mediates outer dynein arms (ODA) binding onto the doublet microtubule. Seems to regulate the assembly of both ODAs and their axonemal docking complex onto ciliary microtubules. Regulates ciliary and flagellar motility and is required for cilia-driven determination of body laterality. The sequence is that of Calaxin from Homo sapiens (Human).